A 353-amino-acid chain; its full sequence is Beta-agarase B (353 aa).

Positions 1 to 17 (MYLIYLRLVFCCALLLG) are cleaved as a signal peptide. C18 carries the N-palmitoyl cysteine lipid modification. A lipid anchor (S-diacylglycerol cysteine) is attached at C18. The interval 30-58 (LPVEQEQEQETEQEGEPEESSEQDLVEEV) is disordered. Positions 32-58 (VEQEQEQETEQEGEPEESSEQDLVEEV) are enriched in acidic residues. Residues 58–353 (VDWKDIPVPA…WIRIYKPVEK (296 aa)) enclose the GH16 domain. Substrate-binding positions include 105 to 107 (YHN) and D181. The Nucleophile role is filled by E184. The active-site Proton donor is the E189. Residues H215, R219, D224, Q226, and E308 each coordinate substrate.

The protein belongs to the glycosyl hydrolase 16 family. In terms of assembly, homodimer.

The protein resides in the cell outer membrane. It catalyses the reaction Hydrolysis of (1-&gt;4)-beta-D-galactosidic linkages in agarose, giving the tetramer as the predominant product.. Cleaves the beta-1,4-linkages between beta-D-galactose and alpha-L-3,6-anhydro-galactose residues in agarose. Cleaves agarose in a random manner with retention of the anomeric-bond configuration, producing beta-anomers that give rise progressively to alpha-anomers when mutarotation takes place. Also tolerant to hybrid substrates containing C6-sulfate groups at the -4, +1, and +3 positions. The polypeptide is Beta-agarase B (agaB) (Zobellia galactanivorans (strain DSM 12802 / CCUG 47099 / CIP 106680 / NCIMB 13871 / Dsij)).